The chain runs to 79 residues: Small ribosomal subunit protein bS18 (79 aa).

This sequence belongs to the bacterial ribosomal protein bS18 family. In terms of assembly, part of the 30S ribosomal subunit. Forms a tight heterodimer with protein bS6.

Binds as a heterodimer with protein bS6 to the central domain of the 16S rRNA, where it helps stabilize the platform of the 30S subunit. This chain is Small ribosomal subunit protein bS18, found in Bacillus velezensis (strain DSM 23117 / BGSC 10A6 / LMG 26770 / FZB42) (Bacillus amyloliquefaciens subsp. plantarum).